A 206-amino-acid polypeptide reads, in one-letter code: Large ribosomal subunit protein uL4 (206 aa).

Belongs to the universal ribosomal protein uL4 family. In terms of assembly, part of the 50S ribosomal subunit.

In terms of biological role, one of the primary rRNA binding proteins, this protein initially binds near the 5'-end of the 23S rRNA. It is important during the early stages of 50S assembly. It makes multiple contacts with different domains of the 23S rRNA in the assembled 50S subunit and ribosome. Forms part of the polypeptide exit tunnel. This is Large ribosomal subunit protein uL4 from Bradyrhizobium sp. (strain ORS 278).